The following is an 89-amino-acid chain: Nitrogen regulatory protein (89 aa).

The PTS EIIA type-2 domain maps to threonine 6–aspartate 89. The active-site Tele-phosphohistidine intermediate is histidine 68.

It localises to the cytoplasm. Functionally, seems to have a role in regulating nitrogen assimilation. The polypeptide is Nitrogen regulatory protein (ptsN) (Pseudomonas putida (Arthrobacter siderocapsulatus)).